The chain runs to 317 residues: Melanocyte-stimulating hormone receptor (317 aa).

Residues 1 to 37 (MPVQGSLRSLVGAVNSTPTASPHLRPATNQTEPQCLE) are Extracellular-facing. An N-linked (GlcNAc...) asparagine glycan is attached at Asn-29. The helical transmembrane segment at 38-63 (VSVPVGLFLCLGLVSLVENTLVVAVI) threads the bilayer. Residues 64–72 (AKNRNLHSP) are Cytoplasmic-facing. Residues 73–93 (MYCFICCLALSDLLVSVSNVL) form a helical membrane-spanning segment. Over 94–118 (KTAVLLLLEAGALAAQATVVQQLGN) the chain is Extracellular. Residues 119–140 (VINMLICSSMVSSLCFLGAIAM) form a helical membrane-spanning segment. At 141–163 (DRYISIFYALRYHSIVTLARARR) the chain is on the cytoplasmic side. A helical membrane pass occupies residues 164–183 (AIAAVWVASILSSILFFTYY). Over 184–191 (DRTAALLC) the chain is Extracellular. A helical membrane pass occupies residues 192-211 (LVVFFLAMLVLMAVLYVHML). Topologically, residues 212 to 240 (TQACQHAQGIARLHKRQHPVQQGWGLKGA) are cytoplasmic. The chain crosses the membrane as a helical span at residues 241-266 (ATLAVLLGVFFLCWGPLFLHLTLIAV). Residues 267 to 279 (CPQHPTCNCIVKN) lie on the Extracellular side of the membrane. The helical transmembrane segment at 280-300 (FKLFLALIICNAIVDPLIYAF) threads the bilayer. Over 301–317 (RSQELRKTLKEVLLFSW) the chain is Cytoplasmic.

The protein belongs to the G-protein coupled receptor 1 family. As to quaternary structure, interacts with MGRN1, but does not undergo MGRN1-mediated ubiquitination; this interaction competes with GNAS-binding and thus inhibits agonist-induced cAMP production. Interacts with OPN3; the interaction results in a decrease in MC1R-mediated cAMP signaling and ultimately a decrease in melanin production in melanocytes.

The protein localises to the cell membrane. Receptor for MSH (alpha, beta and gamma) and ACTH. The activity of this receptor is mediated by G proteins which activate adenylate cyclase. Mediates melanogenesis, the production of eumelanin (black/brown) and phaeomelanin (red/yellow), via regulation of cAMP signaling in melanocytes. In Varecia rubra (Red ruffed lemur), this protein is Melanocyte-stimulating hormone receptor (MC1R).